The following is a 612-amino-acid chain: MTDKEKRLQRQSRIRNFSIIAHIDHGKSTLADRILEKTAAITQREMKEQLLDSMDLERERGITIKLNSVQLKYQAKDGEEYIFHLIDTPGHVDFTYEVSRSLAACEGAILVVDAAQGIEAQTLANVYLALDNDLEILPVINKIDLPSAEPERVRQEVEDVIGLDASEAVLASAKAGIGIEEILEQIVEKVPAPSGDPEAPLQALIFDSLYDAYRGVVAYIRVVQGTVKAGQKIKMMATGKEFEVTEVGVFTPKAVPADELTVGDVGFLTAAIKNVGDTRVGDTITSAENPAPEALPGYRKLNPMVYCGLYPIDTAKYNDLREALEKLELNDSALQYEAETSQALGFGFRCGFLGMLHMEIIQERIEREFNIDLITTAPSVIYDVYMTDGEKIVVDNPSNMPDPQKIDRVEEPFVKATMMVPNDFVGAVMELCQGKRGQFIDMQYLDANRVSIVYEIPLAEIVYEFFDQLKSNTKGYASFDYELIGYKPSKLVKMDIMLNGEKIDALSFIVHRDYAYERGKVIVEKLKELIPRQQFEVPVQAAIGTKIVARSTIKAMRKNVLAKCYGGDISRKRKLLEKQKEGKRRMKQVGSVEVPQEAFMAVLKMDDSGPKS.

One can recognise a tr-type G domain in the interval 12–194; it reads SRIRNFSIIA…QIVEKVPAPS (183 aa). GTP is bound by residues 24-29 and 141-144; these read DHGKST and NKID.

It belongs to the TRAFAC class translation factor GTPase superfamily. Classic translation factor GTPase family. LepA subfamily.

Its subcellular location is the cell membrane. The catalysed reaction is GTP + H2O = GDP + phosphate + H(+). Its function is as follows. Required for accurate and efficient protein synthesis under certain stress conditions. May act as a fidelity factor of the translation reaction, by catalyzing a one-codon backward translocation of tRNAs on improperly translocated ribosomes. Back-translocation proceeds from a post-translocation (POST) complex to a pre-translocation (PRE) complex, thus giving elongation factor G a second chance to translocate the tRNAs correctly. Binds to ribosomes in a GTP-dependent manner. The sequence is that of Elongation factor 4 from Bacillus licheniformis (strain ATCC 14580 / DSM 13 / JCM 2505 / CCUG 7422 / NBRC 12200 / NCIMB 9375 / NCTC 10341 / NRRL NRS-1264 / Gibson 46).